A 64-amino-acid polypeptide reads, in one-letter code: DNA gyrase inhibitor YacG (64 aa).

Residues cysteine 10, cysteine 13, cysteine 29, and cysteine 33 each coordinate Zn(2+).

It belongs to the DNA gyrase inhibitor YacG family. In terms of assembly, interacts with GyrB. Zn(2+) serves as cofactor.

In terms of biological role, inhibits all the catalytic activities of DNA gyrase by preventing its interaction with DNA. Acts by binding directly to the C-terminal domain of GyrB, which probably disrupts DNA binding by the gyrase. The sequence is that of DNA gyrase inhibitor YacG from Pectobacterium atrosepticum (strain SCRI 1043 / ATCC BAA-672) (Erwinia carotovora subsp. atroseptica).